The following is an 89-amino-acid chain: Late cornified envelope protein 3A (89 aa).

Low complexity-rich tracts occupy residues 1–10 and 17–46; these read MSCQQNQQQC and PAKS…SERS. Disordered stretches follow at residues 1 to 46 and 62 to 89; these read MSCQ…SERS and CQSS…AGCC.

The protein belongs to the LCE family. As to quaternary structure, interacts with CYSRT1; the interaction is direct. Skin-specific. Expression was readily detected in adult trunk skin, adult arm skin, fetal skin, penal skin, vulva, esophagus and tongue. Not expressed in the cervix, rectum, lung, colon, or placenta.

Its function is as follows. A structural component of the cornified envelope of the stratum corneum involved in innate cutaneous host defense. Possesses defensin-like antimicrobial activity against a broad spectrum of Gram-positive and Gram-negative bacteria, both aerobic and anaerobic species. Upon inflammation, may regulate skin barrier repair by shaping cutaneous microbiota composition and immune response to bacterial antigens. This chain is Late cornified envelope protein 3A, found in Homo sapiens (Human).